The sequence spans 405 residues: 3-isopropylmalate dehydrogenase 2, chloroplastic (405 aa).

Residues 1–33 (MAAALQTNIRTVKVPATFRAVSKQSLAPFRVRC) constitute a chloroplast transit peptide. Residue Ser-70 is modified to Phosphoserine. Position 114-129 (114-129 (IGGYKWDNNEKHLRPE)) interacts with NAD(+). 3 residues coordinate substrate: Arg-136, Arg-146, and Arg-174. Asn-234 contacts NAD(+). Asp-264 provides a ligand contact to substrate. Asp-264 serves as a coordination point for Mg(2+). Residue Asn-265 participates in NAD(+) binding. 2 residues coordinate Mg(2+): Asp-288 and Asp-292. 318 to 334 (EPIHGSAPDIAGQDKAN) is an NAD(+) binding site.

This sequence belongs to the isocitrate and isopropylmalate dehydrogenases family. Homodimer. The cofactor is Mg(2+). It depends on Mn(2+) as a cofactor. In terms of tissue distribution, expressed at low levels in seedlings, cotyledons, hypocotyls, flowers, roots, pollen, leaves and stems.

The protein resides in the plastid. It is found in the chloroplast stroma. It carries out the reaction (2R,3S)-3-isopropylmalate + NAD(+) = 4-methyl-2-oxopentanoate + CO2 + NADH. The protein operates within amino-acid biosynthesis; L-leucine biosynthesis; L-leucine from 3-methyl-2-oxobutanoate: step 3/4. With respect to regulation, regulated by a thiol-based redox modification. Functionally, involved in leucine biosynthesis; catalyzes the oxidative decarboxylation step in leucine biosynthesis (primary metabolism). Catalyzes the oxidation of 3-carboxy-2-hydroxy-4-methylpentanoate (3-isopropylmalate, 3-IPM) to 3-carboxy-4-methyl-2-oxopentanoate. The product decarboxylates to 4-methyl-2 oxopentanoate. Required during pollen development and involved in embryo sac development. The chain is 3-isopropylmalate dehydrogenase 2, chloroplastic from Arabidopsis thaliana (Mouse-ear cress).